A 201-amino-acid polypeptide reads, in one-letter code: Dermatopontin (201 aa).

The signal sequence occupies residues 1-18 (MDLSLLWVLLPLVTMAWG). A Pyrrolidone carboxylic acid modification is found at Gln-19. The residue at position 23 (Tyr-23) is a Sulfotyrosine. 4 tandem repeats follow at residues 26-79 (PYQQ…ACMP), 70-75 (DRQWNY), 80-135 (TPQS…CCRY), and 125-130 (DREWQF). The interval 26 to 186 (PYQQYHDYSD…AVERDRQWKF (161 aa)) is 2 X 53-55 AA tandem repeats. 5 disulfides stabilise this stretch: Cys-50–Cys-77, Cys-90–Cys-132, Cys-106–Cys-133, Cys-139–Cys-196, and Cys-143–Cys-189. Positions 70-186 (DRQWNYACMP…AVERDRQWKF (117 aa)) are 3 X 6 AA repeats of D-R-[EQ]-W-[NQK]-[FY]. Tyr-162, Tyr-164, Tyr-166, and Tyr-167 each carry sulfotyrosine. The 3-3 repeat unit spans residues 181-186 (DRQWKF). Residue Tyr-194 is modified to Sulfotyrosine.

It belongs to the dermatopontin family. In terms of assembly, interacts with TGFB1, DCN and collagen. Sulfated on tyrosine residue(s). As to expression, expressed in fibroblasts, heart, skeletal muscle, brain and pancreas. Expressed at an intermediate level in lung and kidney, and at a low level in liver and placenta. Expressed at a lower level in fibroblasts from hypertrophic scar lesional skin and in fibroblasts from patients with systemic sclerosis than in normal skin fibroblasts.

It is found in the secreted. The protein resides in the extracellular space. The protein localises to the extracellular matrix. Its function is as follows. Seems to mediate adhesion by cell surface integrin binding. May serve as a communication link between the dermal fibroblast cell surface and its extracellular matrix environment. Enhances TGFB1 activity. Inhibits cell proliferation. Accelerates collagen fibril formation, and stabilizes collagen fibrils against low-temperature dissociation. The protein is Dermatopontin (DPT) of Homo sapiens (Human).